Consider the following 32-residue polypeptide: Turripeptide XIV-18 (32 aa).

I30 carries the isoleucine amide modification.

Post-translationally, contains 2 disulfide bonds. As to expression, expressed by the venom duct.

Its subcellular location is the secreted. This chain is Turripeptide XIV-18, found in Gemmula speciosa (Splendid gem-turris).